The following is a 202-amino-acid chain: Imidazoleglycerol-phosphate dehydratase (202 aa).

The protein belongs to the imidazoleglycerol-phosphate dehydratase family.

The protein localises to the cytoplasm. It catalyses the reaction D-erythro-1-(imidazol-4-yl)glycerol 3-phosphate = 3-(imidazol-4-yl)-2-oxopropyl phosphate + H2O. The protein operates within amino-acid biosynthesis; L-histidine biosynthesis; L-histidine from 5-phospho-alpha-D-ribose 1-diphosphate: step 6/9. The protein is Imidazoleglycerol-phosphate dehydratase of Corynebacterium glutamicum (strain ATCC 13032 / DSM 20300 / JCM 1318 / BCRC 11384 / CCUG 27702 / LMG 3730 / NBRC 12168 / NCIMB 10025 / NRRL B-2784 / 534).